We begin with the raw amino-acid sequence, 248 residues long: mRNA-decapping protein OPG122 (248 aa).

The Nudix hydrolase domain occupies 45–227; the sequence is HKRVSVSAIL…IAKYALDTAK (183 aa). Positions 125 to 147 match the Nudix box motif; it reads GGILKRGENVPECLSREIKEEVN. Position 132 (Glu132) interacts with Mg(2+). Glu141 acts as the Nucleophile in catalysis. Mn(2+) is bound at residue Glu145. Residue Asp167 coordinates Mg(2+).

This sequence belongs to the Nudix hydrolase family. The cofactor is Mg(2+). It depends on Mn(2+) as a cofactor.

It is found in the host mitochondrion. In terms of biological role, decapping enzyme that remove the protective 5'-cap from both host and viral mRNAs to commit transcripts for decay by the cellular exonuclease XRN1. Preferentially targets spliced mRNAs and since all viral genes are intronless, it preferentially targets host over viral transcripts. Acceleration of the turnover of cellular transcripts promotes the shutoff of host protein synthesis and therefore diminish the magnitude of antiviral response. The sequence is that of mRNA-decapping protein OPG122 (OPG122) from Variola virus (isolate Human/India/Ind3/1967) (VARV).